Consider the following 215-residue polypeptide: Octanoyltransferase (215 aa).

Residues 31 to 206 enclose the BPL/LPL catalytic domain; it reads PESQDEVWLV…QLVRHLDYAE (176 aa). Substrate contacts are provided by residues 70–77, 137–139, and 150–152; these read RGGQVTYH, SLG, and GLA. Catalysis depends on Cys-168, which acts as the Acyl-thioester intermediate.

Belongs to the LipB family.

The protein resides in the cytoplasm. It catalyses the reaction octanoyl-[ACP] + L-lysyl-[protein] = N(6)-octanoyl-L-lysyl-[protein] + holo-[ACP] + H(+). It functions in the pathway protein modification; protein lipoylation via endogenous pathway; protein N(6)-(lipoyl)lysine from octanoyl-[acyl-carrier-protein]: step 1/2. Catalyzes the transfer of endogenously produced octanoic acid from octanoyl-acyl-carrier-protein onto the lipoyl domains of lipoate-dependent enzymes. Lipoyl-ACP can also act as a substrate although octanoyl-ACP is likely to be the physiological substrate. In Pseudomonas entomophila (strain L48), this protein is Octanoyltransferase.